The following is a 404-amino-acid chain: Cysteine desulfurase IscS (404 aa).

Residues 75-76 (AT), Asn-155, Gln-183, and 203-205 (SGH) each bind pyridoxal 5'-phosphate. Position 206 is an N6-(pyridoxal phosphate)lysine (Lys-206). Thr-243 is a binding site for pyridoxal 5'-phosphate. Cys-328 functions as the Cysteine persulfide intermediate in the catalytic mechanism. Cys-328 lines the [2Fe-2S] cluster pocket.

The protein belongs to the class-V pyridoxal-phosphate-dependent aminotransferase family. NifS/IscS subfamily. As to quaternary structure, homodimer. Forms a heterotetramer with IscU, interacts with other sulfur acceptors. Requires pyridoxal 5'-phosphate as cofactor.

It localises to the cytoplasm. The catalysed reaction is (sulfur carrier)-H + L-cysteine = (sulfur carrier)-SH + L-alanine. The protein operates within cofactor biosynthesis; iron-sulfur cluster biosynthesis. In terms of biological role, master enzyme that delivers sulfur to a number of partners involved in Fe-S cluster assembly, tRNA modification or cofactor biosynthesis. Catalyzes the removal of elemental sulfur atoms from cysteine to produce alanine. Functions as a sulfur delivery protein for Fe-S cluster synthesis onto IscU, an Fe-S scaffold assembly protein, as well as other S acceptor proteins. This is Cysteine desulfurase IscS from Klebsiella pneumoniae subsp. pneumoniae (strain ATCC 700721 / MGH 78578).